The sequence spans 2200 residues: Bromodomain and WD repeat-containing DDB_G0285837 (2200 aa).

Disordered regions lie at residues 137-178 (GFND…SNTN), 194-245 (VTPT…TTPP), and 259-288 (DIQQ…NNNN). Low complexity-rich tracts occupy residues 161-176 (NNNN…SNSN), 203-242 (NTTN…TTLT), and 259-273 (DIQQ…QQQQ). WD repeat units follow at residues 352-391 (GHKA…LIAT), 394-433 (GHLG…YDSI), 442-483 (SVNN…HVIS), 548-586 (GKTN…PKLV), 591-630 (GHPT…KWDH), 653-691 (RSKA…FHLE), 694-736 (EHTS…KKFV), and 741-780 (GFQC…DINN). Composition is skewed to acidic residues over residues 918 to 933 (DDEI…EDFN) and 955 to 968 (QDDD…EDYD). Disordered regions lie at residues 918-1180 (DDEI…NHLT), 1262-1297 (NNNN…DDDD), 1461-1538 (ENNQ…NNNN), and 1662-1703 (NFNS…NNNN). Residues 974–1000 (MSTRKKSKIKADKRKKRLLKQSKKFTR) are compositionally biased toward basic residues. Residues 1052 to 1074 (GEIEMDDDDQYLNDNILDSDDND) are compositionally biased toward acidic residues. The span at 1109-1132 (SSDNSSENDSSANGSDSDYSGSKS) shows a compositional bias: low complexity. Residues 1133–1164 (NKNKRGDKSKRNKKGKKNVKNKKVQKRGRKKS) are compositionally biased toward basic residues. Composition is skewed to low complexity over residues 1262 to 1292 (NNNN…QQIN) and 1461 to 1525 (ENNQ…NSLN). The 102-residue stretch at 1722–1823 (EKIENLKKEM…HRISDILKEA (102 aa)) folds into the Bromo domain. The tract at residues 1850–2200 (DKDDSQLDDE…RGRGRPPKSN (351 aa)) is disordered. Residues 1878–1888 (LANNNHGNNKS) show a composition bias toward low complexity. The span at 1910-1920 (TGKNITRSLLS) shows a compositional bias: polar residues. Low complexity predominate over residues 1945–1958 (TTTTTTTTTTTSST). 3 stretches are compositionally biased toward acidic residues: residues 2016–2028 (DYND…DNDG), 2057–2073 (EDED…EEDY), and 2104–2113 (SEEEEDEDQS). Residues 2114–2124 (DVNSNNNSDNE) show a composition bias toward low complexity. Residues 2125–2138 (SGGEDGYSGEDGSE) are compositionally biased toward acidic residues. Residues 2170–2185 (SFKNNNNNNNINNNVN) show a composition bias toward low complexity. Residues 2190–2200 (KRGRGRPPKSN) are compositionally biased toward basic residues.

In Dictyostelium discoideum (Social amoeba), this protein is Bromodomain and WD repeat-containing DDB_G0285837.